A 249-amino-acid chain; its full sequence is Putative type I specificity subunit S.MpnORF615P (249 aa).

This sequence belongs to the type-I restriction system S methylase family. In terms of assembly, the methyltransferase is composed of M and S polypeptides.

The specificity (S) subunit of a type I methyltransferase (MTase); this subunit dictates DNA sequence specificity. The single R subunit has multiple frameshifts and is probably not expressed. This Mycoplasma pneumoniae (strain ATCC 29342 / M129 / Subtype 1) (Mycoplasmoides pneumoniae) protein is Putative type I specificity subunit S.MpnORF615P.